The chain runs to 376 residues: Fibromodulin (376 aa).

The signal sequence occupies residues 1-18 (MQWASILLLRGLCSLSQG). Q19 carries the pyrrolidone carboxylic acid modification. Residues Y20, Y38, Y53, Y55, Y63, and Y65 each carry the sulfotyrosine modification. The LRRNT domain maps to 67 to 105 (APPPPEPRDCPQECDCPPNFPTAMYCDNRNLKYLPFVPS). 8 LRR repeats span residues 106–127 (RMKY…VFDN), 130–143 (GLLW…QITS), 156–176 (HLER…PLPR), 177–198 (SLRE…ALEG), 201–222 (NLTA…MRGL), 224–245 (SLIL…LPSA), 246–266 (LEQL…YFRG), and 269–289 (KLLY…ATNT). Residue N127 is glycosylated (N-linked (GlcNAc...) (keratan sulfate) asparagine). N-linked (GlcNAc...) (keratan sulfate) asparagine glycosylation occurs at N166. A glycan (N-linked (GlcNAc...) (keratan sulfate) asparagine) is linked at N201. N291 carries an N-linked (GlcNAc...) (keratan sulfate) asparagine glycan. LRR repeat units follow at residues 294–315 (SLLE…NTNL) and 316–335 (ENLY…SFCT). A disulfide bridge connects residues C334 and C367. N-linked (GlcNAc...) asparagine glycosylation occurs at N341. An LRR 11 repeat occupies 344–367 (KLQVLRLDGNEIKRSAMPVDAPLC).

Belongs to the small leucine-rich proteoglycan (SLRP) family. SLRP class II subfamily. As to quaternary structure, binds to type I and type II collagen. Binds keratan sulfate chains.

It is found in the secreted. Its subcellular location is the extracellular space. The protein localises to the extracellular matrix. In terms of biological role, affects the rate of fibrils formation. May have a primary role in collagen fibrillogenesis. The chain is Fibromodulin (Fmod) from Rattus norvegicus (Rat).